Here is a 332-residue protein sequence, read N- to C-terminus: Caffeoylshikimate esterase (332 aa).

Low complexity predominate over residues 1 to 13 (MPSEAESSANSAP). Positions 1 to 26 (MPSEAESSANSAPATPPPPPNFWGTM) are disordered. The active-site Nucleophile is the S147. Catalysis depends on charge relay system residues D268 and H298.

It belongs to the AB hydrolase superfamily. Monoacylglycerol lipase family. Interacts with ACBP2. In terms of tissue distribution, expressed in vasculature of roots and leaves, stems, flowers and siliques.

Its subcellular location is the cell membrane. It catalyses the reaction 5-O-[(E)-caffeoyl]-shikimate + H2O = shikimate + (E)-caffeate + H(+). Its function is as follows. Esterase involved in the biosynthesis of lignin. Hydrolyzes caffeoylshikimate into caffeate and shikimate. Together with 4-coumarate--CoA ligase (4CL), acts on an alternative reaction for the formation of caffeoyl-CoA and bypasses the second reaction of shikimate O-hydroxycinnamoyltransferase (HST). Also accepts 4-coumaroylshikimate as substrate, but with lower activity. According to PubMed:20345607 and PubMed:22915575, possesses monoacylglycerol O-acyltransferase, monoacylglycerol lipase and lysophospholipase activities in vitro. With the association of ACBP2, may promote the degradation of lysophosphatidylcholine and detoxify the peroxidized membrane in response to cadmium-induced oxidative stress. However these results require additional confirmation in vivo. This chain is Caffeoylshikimate esterase (CSE), found in Arabidopsis thaliana (Mouse-ear cress).